We begin with the raw amino-acid sequence, 144 residues long: Large ribosomal subunit protein uL15 (144 aa).

A compositionally biased stretch (polar residues) spans 1–12; that stretch reads MRLNTLSPSLGS. A disordered region spans residues 1–51; it reads MRLNTLSPSLGSRKNHKRLGRGIGSGFGKTAGRGHKGQKSRSGGHVNRGFE. Over residues 21-31 the composition is skewed to gly residues; the sequence is RGIGSGFGKTA.

The protein belongs to the universal ribosomal protein uL15 family. Part of the 50S ribosomal subunit.

In terms of biological role, binds to the 23S rRNA. The sequence is that of Large ribosomal subunit protein uL15 from Buchnera aphidicola subsp. Schizaphis graminum (strain Sg).